A 1122-amino-acid polypeptide reads, in one-letter code: Breast carcinoma-amplified sequence 3 homolog (1122 aa).

The interval 1 to 41 (MSADSPRRHPSGVVGSGIGLGSGSGTGLGSGSTGGSKSGAA) is disordered. The span at 14–37 (VGSGIGLGSGSGTGLGSGSTGGSK) shows a compositional bias: gly residues. At S55 the chain carries Phosphoserine. Low complexity-rich tracts occupy residues 357-377 (GTTA…ASGG), 626-641 (GSNS…SLSD), 966-987 (TKDN…PSSN), and 1036-1051 (LSLE…PLSL). Disordered stretches follow at residues 357–382 (GTTA…DAKQ), 620–644 (GVGV…DDSG), 966–990 (TKDN…NKVQ), 1033–1054 (NSRL…LTNG), and 1071–1122 (GVAQ…RRNL). S638 carries the post-translational modification Phosphoserine. Positions 1087-1112 (VDDDDEEEEEEEEELDEEAEPDDDER) are enriched in acidic residues. A compositionally biased stretch (basic and acidic residues) spans 1113 to 1122 (EDRPLGRRNL).

It belongs to the BCAS3 family. Expressed in all postembryonic pericardial cells, but not in cardioblasts. Also expressed in Garland cells in third instar larvae (at protein level).

It localises to the cytoplasm. Regulates macropinocytosis in pericardial cells. The sequence is that of Breast carcinoma-amplified sequence 3 homolog (rudhira) from Drosophila melanogaster (Fruit fly).